A 294-amino-acid chain; its full sequence is 33 kDa chaperonin (294 aa).

Disulfide bonds link Cys238/Cys240 and Cys271/Cys274.

Belongs to the HSP33 family. Post-translationally, under oxidizing conditions two disulfide bonds are formed involving the reactive cysteines. Under reducing conditions zinc is bound to the reactive cysteines and the protein is inactive.

It localises to the cytoplasm. Redox regulated molecular chaperone. Protects both thermally unfolding and oxidatively damaged proteins from irreversible aggregation. Plays an important role in the bacterial defense system toward oxidative stress. The protein is 33 kDa chaperonin of Staphylococcus carnosus (strain TM300).